A 525-amino-acid chain; its full sequence is MDKILILDFGSQVTQLIARRVREAHVYCELHSFDMPIEEIQAFAPKAIILSGGPNSVYESDYQADPKLFELGVPVLGICYGMQFMAQTLGGKVESGDKREFGYAQIKARHHSKLLEGLQDQIDDAGNGFLDVWMSHGDKVTQLPAGFQVIAETPSCPYAAMADEARGFYGVQFHPEVTHTKRGTEMIHRFVLHVAGCKPSWTMPNYIDEAVKKIREQVGDEEVILGLSGGVDSSVAAALIHRAIGDQLTCVFVDHGLLRLNEGKMVMEMFAQNLGVKVVHVQAEADFMAKLAGETDPEKKRKIIGAEFIEVFDRESGKLTNAKWLAQGTIYPDVIESAGAKTKKAHTIKSHHNVGGLPEDMNLKLLEPLRELFKDEVRQLGVALGLPHDMVYRHPFPGPGLGVRILGEVKKEYADLLRQADAIFIEELRNTVDEKTGKNWYELTSQAFAVFLPVKSVGVMGDGRTYDYVVALRAVVTSDFMTAHWAELPYSLLGRASNRIINEVRGINRVVYDVSGKPPATIEWE.

The Glutamine amidotransferase type-1 domain maps to 3-200 (KILILDFGSQ…VLHVAGCKPS (198 aa)). Catalysis depends on Cys-79, which acts as the Nucleophile. Residues His-174 and Glu-176 contribute to the active site. One can recognise a GMPS ATP-PPase domain in the interval 201 to 393 (WTMPNYIDEA…LGLPHDMVYR (193 aa)). 228-234 (SGGVDSS) lines the ATP pocket.

In terms of assembly, homodimer.

The enzyme catalyses XMP + L-glutamine + ATP + H2O = GMP + L-glutamate + AMP + diphosphate + 2 H(+). It functions in the pathway purine metabolism; GMP biosynthesis; GMP from XMP (L-Gln route): step 1/1. Catalyzes the synthesis of GMP from XMP. In Chromobacterium violaceum (strain ATCC 12472 / DSM 30191 / JCM 1249 / CCUG 213 / NBRC 12614 / NCIMB 9131 / NCTC 9757 / MK), this protein is GMP synthase [glutamine-hydrolyzing].